A 309-amino-acid chain; its full sequence is NAD kinase (309 aa).

Catalysis depends on Asp89, which acts as the Proton acceptor. NAD(+) contacts are provided by residues 89 to 90, 163 to 164, His174, Arg191, Asp193, and 204 to 209; these read DG, NE, and TAYALS.

Belongs to the NAD kinase family. It depends on a divalent metal cation as a cofactor.

It localises to the cytoplasm. The catalysed reaction is NAD(+) + ATP = ADP + NADP(+) + H(+). Its function is as follows. Involved in the regulation of the intracellular balance of NAD and NADP, and is a key enzyme in the biosynthesis of NADP. Catalyzes specifically the phosphorylation on 2'-hydroxyl of the adenosine moiety of NAD to yield NADP. In Shewanella baltica (strain OS185), this protein is NAD kinase.